The primary structure comprises 162 residues: MVNTFDKTFEKRLINAFMRKGNYIKAERIYFTVLNRLTTLGIQNPYKFLRETLIKMTPIMGVVKKKRGVKEKIYPKYLEPRMGEKYAIKWLLKKLEKSKGDLLINNIVDEFLKASKDQGEVLKEKWALYKEVRYALSFNKAKKKKVSFIESKIKATKRRKWY.

This sequence belongs to the universal ribosomal protein uS7 family. In terms of assembly, part of the small ribosomal subunit.

It localises to the mitochondrion. Functionally, one of the primary rRNA binding proteins, it binds directly to 16S-like rRNA where it nucleates assembly of the head domain of the small subunit. In Dictyostelium citrinum (Slime mold), this protein is Small ribosomal subunit protein uS7m (mrps7).